Here is a 189-residue protein sequence, read N- to C-terminus: Pyridoxal 5'-phosphate synthase subunit PdxT (189 aa).

L-glutamine is bound at residue 50–52; the sequence is GES. Cys-80 (nucleophile) is an active-site residue. Residues Arg-107 and 134–135 contribute to the L-glutamine site; that span reads IR. Active-site charge relay system residues include His-169 and Glu-171.

It belongs to the glutaminase PdxT/SNO family. In the presence of PdxS, forms a dodecamer of heterodimers. Only shows activity in the heterodimer.

It catalyses the reaction aldehydo-D-ribose 5-phosphate + D-glyceraldehyde 3-phosphate + L-glutamine = pyridoxal 5'-phosphate + L-glutamate + phosphate + 3 H2O + H(+). The catalysed reaction is L-glutamine + H2O = L-glutamate + NH4(+). The protein operates within cofactor biosynthesis; pyridoxal 5'-phosphate biosynthesis. Functionally, catalyzes the hydrolysis of glutamine to glutamate and ammonia as part of the biosynthesis of pyridoxal 5'-phosphate. The resulting ammonia molecule is channeled to the active site of PdxS. This is Pyridoxal 5'-phosphate synthase subunit PdxT from Picrophilus torridus (strain ATCC 700027 / DSM 9790 / JCM 10055 / NBRC 100828 / KAW 2/3).